The sequence spans 33 residues: MSDIN-like toxin proprotein 6 (33 aa).

The propeptide occupies 1–10; that stretch reads MSDINATRLP. A cross-link (cyclopeptide (Leu-Pro)) is located at residues 11-20; that stretch reads LILLAALGIP. The propeptide occupies 21-33; that stretch reads SDDADSTLTRGER.

It belongs to the MSDIN fungal toxin family. Processed by the macrocyclase-peptidase enzyme POPB to yield a toxic cyclic decapeptide. POPB first removes 10 residues from the N-terminus. Conformational trapping of the remaining peptide forces the enzyme to release this intermediate rather than proceed to macrocyclization. The enzyme rebinds the remaining peptide in a different conformation and catalyzes macrocyclization of the N-terminal 10 residues.

Probable toxin that belongs to the MSDIN-like toxin family responsible for a large number of food poisoning cases and deaths. In Amanita phalloides (Death cap), this protein is MSDIN-like toxin proprotein 6.